The chain runs to 254 residues: Thiazole synthase (254 aa).

Residue Lys95 is the Schiff-base intermediate with DXP of the active site. 1-deoxy-D-xylulose 5-phosphate contacts are provided by residues Gly156, 182 to 183 (AG), and 204 to 205 (NT).

Belongs to the ThiG family. As to quaternary structure, homotetramer. Forms heterodimers with either ThiH or ThiS.

The protein resides in the cytoplasm. The enzyme catalyses [ThiS sulfur-carrier protein]-C-terminal-Gly-aminoethanethioate + 2-iminoacetate + 1-deoxy-D-xylulose 5-phosphate = [ThiS sulfur-carrier protein]-C-terminal Gly-Gly + 2-[(2R,5Z)-2-carboxy-4-methylthiazol-5(2H)-ylidene]ethyl phosphate + 2 H2O + H(+). The protein operates within cofactor biosynthesis; thiamine diphosphate biosynthesis. Functionally, catalyzes the rearrangement of 1-deoxy-D-xylulose 5-phosphate (DXP) to produce the thiazole phosphate moiety of thiamine. Sulfur is provided by the thiocarboxylate moiety of the carrier protein ThiS. In vitro, sulfur can be provided by H(2)S. The sequence is that of Thiazole synthase from Vibrio atlanticus (strain LGP32) (Vibrio splendidus (strain Mel32)).